The sequence spans 116 residues: Protein Rev (116 aa).

2 positions are modified to phosphoserine; by host CK2: serine 5 and serine 8. Residues 18 to 26 (LIKFLYQSN) form a homomultimerization region. The disordered stretch occupies residues 23–48 (YQSNPPPKPEGTRQARRNRRRRWRER). The Nuclear localization signal and RNA-binding (RRE) signature appears at 34–50 (TRQARRNRRRRWRERQR). A compositionally biased stretch (basic residues) spans 36–47 (QARRNRRRRWRE). The Nuclear export signal and binding to XPO1 signature appears at 73–84 (LQLPPLERLTLD). Residues serine 92 and serine 99 each carry the phosphoserine; by host modification. The disordered stretch occupies residues 92-116 (SGTQGVGSPQILVESPTVLESGTKE).

This sequence belongs to the HIV-1 REV protein family. As to quaternary structure, homomultimer; when bound to the RRE. Multimeric assembly is essential for activity and may involve XPO1. Binds to human KPNB1, XPO1, TNPO1, RANBP5 and IPO7. Interacts with the viral Integrase. Interacts with human KHDRBS1. Interacts with human NAP1; this interaction decreases Rev multimerization and stimulates its activity. Interacts with human DEAD-box helicases DDX3 and DDX24; these interactions may serve for viral RNA export to the cytoplasm and packaging, respectively. Interacts with human PSIP1; this interaction may inhibit HIV-1 DNA integration by promoting dissociation of the Integrase-LEDGF/p75 complex. Post-translationally, asymmetrically arginine dimethylated at one site by host PRMT6. Methylation impairs the RNA-binding activity and export of viral RNA from the nucleus to the cytoplasm. In terms of processing, phosphorylated by protein kinase CK2. Presence of, and maybe binding to the N-terminus of the regulatory beta subunit of CK2 is necessary for CK2-mediated Rev's phosphorylation.

Its subcellular location is the host nucleus. The protein resides in the host nucleolus. It is found in the host cytoplasm. Its function is as follows. Escorts unspliced or incompletely spliced viral pre-mRNAs (late transcripts) out of the nucleus of infected cells. These pre-mRNAs carry a recognition sequence called Rev responsive element (RRE) located in the env gene, that is not present in fully spliced viral mRNAs (early transcripts). This function is essential since most viral proteins are translated from unspliced or partially spliced pre-mRNAs which cannot exit the nucleus by the pathway used by fully processed cellular mRNAs. Rev itself is translated from a fully spliced mRNA that readily exits the nucleus. Rev's nuclear localization signal (NLS) binds directly to KPNB1/Importin beta-1 without previous binding to KPNA1/Importin alpha-1. KPNB1 binds to the GDP bound form of RAN (Ran-GDP) and targets Rev to the nucleus. In the nucleus, the conversion from Ran-GDP to Ran-GTP dissociates Rev from KPNB1 and allows Rev's binding to the RRE in viral pre-mRNAs. Rev multimerization on the RRE via cooperative assembly exposes its nuclear export signal (NES) to the surface. Rev can then form a complex with XPO1/CRM1 and Ran-GTP, leading to nuclear export of the complex. Conversion from Ran-GTP to Ran-GDP mediates dissociation of the Rev/RRE/XPO1/RAN complex, so that Rev can return to the nucleus for a subsequent round of export. Beside KPNB1, also seems to interact with TNPO1/Transportin-1, RANBP5/IPO5 and IPO7/RANBP7 for nuclear import. The nucleoporin-like HRB/RIP is an essential cofactor that probably indirectly interacts with Rev to release HIV RNAs from the perinuclear region to the cytoplasm. The polypeptide is Protein Rev (Human immunodeficiency virus type 1 group M subtype B (isolate SC) (HIV-1)).